Here is a 601-residue protein sequence, read N- to C-terminus: Elongation factor 4 (601 aa).

The 183-residue stretch at 5-187 folds into the tr-type G domain; sequence SNIRNFAIIA…AIVTKLPSPN (183 aa). Residues 17–22 and 134–137 each bind GTP; these read DHGKST and NKID.

This sequence belongs to the TRAFAC class translation factor GTPase superfamily. Classic translation factor GTPase family. LepA subfamily.

The protein localises to the cell inner membrane. It carries out the reaction GTP + H2O = GDP + phosphate + H(+). In terms of biological role, required for accurate and efficient protein synthesis under certain stress conditions. May act as a fidelity factor of the translation reaction, by catalyzing a one-codon backward translocation of tRNAs on improperly translocated ribosomes. Back-translocation proceeds from a post-translocation (POST) complex to a pre-translocation (PRE) complex, thus giving elongation factor G a second chance to translocate the tRNAs correctly. Binds to ribosomes in a GTP-dependent manner. In Orientia tsutsugamushi (strain Ikeda) (Rickettsia tsutsugamushi), this protein is Elongation factor 4.